Here is a 376-residue protein sequence, read N- to C-terminus: ATP phosphoribosyltransferase regulatory subunit (376 aa).

This sequence belongs to the class-II aminoacyl-tRNA synthetase family. HisZ subfamily. As to quaternary structure, heteromultimer composed of HisG and HisZ subunits.

It localises to the cytoplasm. It functions in the pathway amino-acid biosynthesis; L-histidine biosynthesis; L-histidine from 5-phospho-alpha-D-ribose 1-diphosphate: step 1/9. In terms of biological role, required for the first step of histidine biosynthesis. May allow the feedback regulation of ATP phosphoribosyltransferase activity by histidine. In Brucella anthropi (strain ATCC 49188 / DSM 6882 / CCUG 24695 / JCM 21032 / LMG 3331 / NBRC 15819 / NCTC 12168 / Alc 37) (Ochrobactrum anthropi), this protein is ATP phosphoribosyltransferase regulatory subunit.